The sequence spans 574 residues: Arginine--tRNA ligase (574 aa).

Residues 124–134 (ANPNGPLHIGH) carry the 'HIGH' region motif.

It belongs to the class-I aminoacyl-tRNA synthetase family.

The protein resides in the cytoplasm. It catalyses the reaction tRNA(Arg) + L-arginine + ATP = L-arginyl-tRNA(Arg) + AMP + diphosphate. The protein is Arginine--tRNA ligase of Methanococcus aeolicus (strain ATCC BAA-1280 / DSM 17508 / OCM 812 / Nankai-3).